The following is a 108-amino-acid chain: Protein RnfH (108 aa).

Residues 86–108 form a disordered region; that stretch reads ARRRRAEKAKEEGRANKVTGGRA.

This sequence belongs to the UPF0125 (RnfH) family.

The protein is Protein RnfH of Pseudoalteromonas atlantica (strain T6c / ATCC BAA-1087).